A 402-amino-acid polypeptide reads, in one-letter code: Putative neuropeptide Y receptor 11 (402 aa).

The Extracellular portion of the chain corresponds to 1–45 (MGSVNESCDNYVEIFNKINYFFRDDQVINGTEYSPKEFGYFITFA). N-linked (GlcNAc...) asparagine glycosylation is found at Asn5 and Asn29. A helical membrane pass occupies residues 46–66 (YMLIILFGAIGNFLTIIVVIL). The Cytoplasmic portion of the chain corresponds to 67 to 85 (NPAMRTTRNFFILNLALSD). A helical membrane pass occupies residues 86 to 106 (FFVCIVTAPTTLYTVLYMFWP). Residues 107–122 (FSRTLCKIAGSLQGFN) lie on the Extracellular side of the membrane. An intrachain disulfide couples Cys112 to Cys194. Residues 123–143 (IFLSTFSIASIAVDRYVLIIF) form a helical membrane-spanning segment. Topologically, residues 144 to 152 (PTKRERQQN) are cytoplasmic. Residues 153–173 (LSFCFFIMIWVISLILAVPLL) form a helical membrane-spanning segment. Topologically, residues 174–210 (QASDLTPVFVEPSCDLALYICHEQNEIWEKMIISKGT) are extracellular. Residues 211–231 (YTLAVLITQYAFPLFSLVFAY) traverse the membrane as a helical segment. Topologically, residues 232–272 (SRIAHRMKLRFANRNQNVTTNTNTSQRRRSVVERQRRTHLL) are cytoplasmic. The chain crosses the membrane as a helical span at residues 273-293 (LVCVVAVFAVAWLPLNVFHIF). At 294 to 306 (NTFELVNSFSVTT) the chain is on the extracellular side. Residues 307–328 (FSICHCLAMCSACLNPLIYAFF) traverse the membrane as a helical segment. The Cytoplasmic segment spans residues 329–402 (NHNFRIEFMH…LSAMEQDEQL (74 aa)).

This sequence belongs to the G-protein coupled receptor 1 family.

The protein localises to the cell membrane. Functionally, could be a receptor for neuropeptide Y and peptide YY. In Caenorhabditis elegans, this protein is Putative neuropeptide Y receptor 11 (npr-11).